We begin with the raw amino-acid sequence, 451 residues long: G-protein coupled receptor 61 (451 aa).

Positions 1 to 14 are enriched in low complexity; the sequence is MESSPIPQSSGNSS. Residues 1 to 31 are disordered; sequence MESSPIPQSSGNSSTLGRVPQTPGPSTASGV. The Extracellular portion of the chain corresponds to 1–44; that stretch reads MESSPIPQSSGNSSTLGRVPQTPGPSTASGVPEVGLRDVASESV. N-linked (GlcNAc...) asparagine glycosylation is present at N12. The helical transmembrane segment at 45–67 threads the bilayer; sequence ALFFMLLLDLTAVAGNAAVMAVI. Residues 68 to 75 are Cytoplasmic-facing; that stretch reads AKTPALRK. A helical transmembrane segment spans residues 76 to 98; sequence FVFVFHLCLVDLLAALTLMPLAM. Residues 99-112 are Extracellular-facing; it reads LSSSALFDHALFGE. The chain crosses the membrane as a helical span at residues 113–135; that stretch reads VACRLYLFLSVCFVSLAILSVSA. At 136 to 155 the chain is on the cytoplasmic side; the sequence is INVERYYYVVHPMRYEVRMT. A helical transmembrane segment spans residues 156–178; the sequence is LGLVASVLVGVWVKALAMASVPV. Residues 179-206 lie on the Extracellular side of the membrane; that stretch reads LGRVSWEEGAPSVPPGCSLQWSHSAYCQ. A helical membrane pass occupies residues 207–229; that stretch reads LFVVVFAVLYFLLPLLLILVVYC. Over 230–287 the chain is Cytoplasmic; it reads SMFRVARVAAMQHGPLPTWMETPRQRSESLSSRSTMVTSSGAPQTTPHRTFGGGKAAV. A helical transmembrane segment spans residues 288–310; that stretch reads VLLAVGGQFLLCWLPYFSFHLYV. Topologically, residues 311-324 are extracellular; sequence ALSAQPISTGQVES. Residues 325–344 traverse the membrane as a helical segment; that stretch reads VVTWIGYFCFTSNPFFYGCL. Residues 345-451 lie on the Cytoplasmic side of the membrane; the sequence is NRQIRGELSK…RPAASPRLES (107 aa).

This sequence belongs to the G-protein coupled receptor 1 family. As to quaternary structure, forms heterodimer with MTNR1B. Interacts with ARRB1 and ARRB2 in a spontaneous and agonist-independent manner; leading to the internalization of GPR61 in the endosomal compartment. In terms of tissue distribution, expressed in brain; detected in frontal and temporal lobes, occipital pole, amygdala and hippocampus. Also expressed in testis and T cells, B cells, and monocyte. Low expression in many other tissues. Widely expressed in the hippocampus (at protein level).

It localises to the cell membrane. It is found in the endosome membrane. In terms of biological role, orphan G-protein coupled receptor. Constitutively activates the G(s)-alpha/cAMP signaling pathway. Shows a reciprocal regulatory interaction with the melatonin receptor MTNR1B most likely through receptor heteromerization. May be involved in the regulation of food intake and body weight. This is G-protein coupled receptor 61 (GPR61) from Homo sapiens (Human).